We begin with the raw amino-acid sequence, 344 residues long: RNA 3'-terminal phosphate cyclase (344 aa).

Residues Gln102 and 284-288 each bind ATP; that span reads FLGDQ. His308 functions as the Tele-AMP-histidine intermediate in the catalytic mechanism.

Belongs to the RNA 3'-terminal cyclase family. Type 1 subfamily.

It localises to the cytoplasm. The enzyme catalyses a 3'-end 3'-phospho-ribonucleotide-RNA + ATP = a 3'-end 2',3'-cyclophospho-ribonucleotide-RNA + AMP + diphosphate. Catalyzes the conversion of 3'-phosphate to a 2',3'-cyclic phosphodiester at the end of RNA. The mechanism of action of the enzyme occurs in 3 steps: (A) adenylation of the enzyme by ATP; (B) transfer of adenylate to an RNA-N3'P to produce RNA-N3'PP5'A; (C) and attack of the adjacent 2'-hydroxyl on the 3'-phosphorus in the diester linkage to produce the cyclic end product. The biological role of this enzyme is unknown but it is likely to function in some aspects of cellular RNA processing. This is RNA 3'-terminal phosphate cyclase from Thermococcus gammatolerans (strain DSM 15229 / JCM 11827 / EJ3).